The sequence spans 85 residues: Elicitor peptide 7 (85 aa).

The propeptide occupies 1-62 (MEGEGRREDG…TEVVNIPRSV (62 aa)). A disordered region spans residues 66 to 85 (NVAARKGKQQTSSGKGGGTN).

The protein belongs to the brassicaceae elicitor peptide family.

Its function is as follows. Elicitor of plant defense. In Arabidopsis thaliana (Mouse-ear cress), this protein is Elicitor peptide 7 (PEP7).